The primary structure comprises 203 residues: ATP-dependent dethiobiotin synthetase BioD (203 aa).

Position 11 to 16 (11 to 16) interacts with ATP; sequence NVGKTI. Position 15 (Thr-15) interacts with Mg(2+). The active site involves Lys-31. Thr-35 serves as a coordination point for substrate. ATP is bound by residues Asp-42 and 94-97; that span reads EGAG. Positions 42 and 94 each coordinate Mg(2+).

It belongs to the dethiobiotin synthetase family. In terms of assembly, homodimer. It depends on Mg(2+) as a cofactor.

Its subcellular location is the cytoplasm. The enzyme catalyses (7R,8S)-7,8-diammoniononanoate + CO2 + ATP = (4R,5S)-dethiobiotin + ADP + phosphate + 3 H(+). It participates in cofactor biosynthesis; biotin biosynthesis; biotin from 7,8-diaminononanoate: step 1/2. Functionally, catalyzes a mechanistically unusual reaction, the ATP-dependent insertion of CO2 between the N7 and N8 nitrogen atoms of 7,8-diaminopelargonic acid (DAPA, also called 7,8-diammoniononanoate) to form a ureido ring. This Lawsonia intracellularis (strain PHE/MN1-00) protein is ATP-dependent dethiobiotin synthetase BioD.